The chain runs to 227 residues: Transmembrane emp24 domain-containing protein 4 (227 aa).

The signal sequence occupies residues 1–29 (MAGVGVGPLQGMVRFGLLVLTVCAACARG). Residues 30–194 (LYFHIGETEK…RLTSESTNQR (165 aa)) are Lumenal-facing. The region spanning 39 to 137 (KRCFIEEIPD…KLRVHLDIQV (99 aa)) is the GOLD domain. N117 is a glycosylation site (N-linked (GlcNAc...) asparagine). Residues 147–176 (IAAKDKLTELQLRARQLLDQVEQIQKEQDY) adopt a coiled-coil conformation. The chain crosses the membrane as a helical span at residues 195 to 212 (VLWWSIAQTVILILTGIW). The Cytoplasmic portion of the chain corresponds to 213 to 227 (QMRHLKSFFEAKKLV). The short motif at 220–221 (FF) is the COPII vesicle coat-binding element. A COPI vesicle coat-binding motif is present at residues 220-227 (FFEAKKLV).

The protein belongs to the EMP24/GP25L family.

Its subcellular location is the endoplasmic reticulum membrane. Functionally, involved in vesicular protein trafficking, mainly in the early secretory pathway. Involved in the maintenance of the Golgi apparatus. Appears to play a role in the biosynthesis of secreted cargo including processing. Involved in endoplasmic reticulum stress response. May play a role in the regulation of heat-shock response and apoptosis. This Mus musculus (Mouse) protein is Transmembrane emp24 domain-containing protein 4 (Tmed4).